The chain runs to 155 residues: Biotin carboxyl carrier protein of acetyl-CoA carboxylase (155 aa).

Positions 72–155 (AASDELSGHL…EFDEPLIVIE (84 aa)) constitute a Biotinyl-binding domain. At lysine 121 the chain carries N6-biotinyllysine.

As to quaternary structure, homodimer.

It participates in lipid metabolism; fatty acid biosynthesis. In terms of biological role, this protein is a component of the acetyl coenzyme A carboxylase complex; first, biotin carboxylase catalyzes the carboxylation of the carrier protein and then the transcarboxylase transfers the carboxyl group to form malonyl-CoA. This is Biotin carboxyl carrier protein of acetyl-CoA carboxylase (accB) from Haemophilus influenzae (strain ATCC 51907 / DSM 11121 / KW20 / Rd).